We begin with the raw amino-acid sequence, 296 residues long: GTPase Era (296 aa).

The Era-type G domain occupies Lys3–Glu170. The G1 stretch occupies residues Gly11–Ser18. Gly11–Ser18 contacts GTP. Residues Gln37 to Asn41 are G2. Residues Asp58–Gly61 are G3. Residues Asp58–Met62 and Asn120–Asp123 contribute to the GTP site. The G4 stretch occupies residues Asn120–Asp123. Positions Ile149–Ala151 are G5. Positions Leu201 to Lys277 constitute a KH type-2 domain.

Belongs to the TRAFAC class TrmE-Era-EngA-EngB-Septin-like GTPase superfamily. Era GTPase family. Monomer.

The protein localises to the cytoplasm. Its subcellular location is the cell membrane. In terms of biological role, an essential GTPase that binds both GDP and GTP, with rapid nucleotide exchange. Plays a role in 16S rRNA processing and 30S ribosomal subunit biogenesis and possibly also in cell cycle regulation and energy metabolism. The chain is GTPase Era from Clostridium acetobutylicum (strain ATCC 824 / DSM 792 / JCM 1419 / IAM 19013 / LMG 5710 / NBRC 13948 / NRRL B-527 / VKM B-1787 / 2291 / W).